Here is a 340-residue protein sequence, read N- to C-terminus: Heat-inducible transcription repressor HrcA (340 aa).

It belongs to the HrcA family.

In terms of biological role, negative regulator of class I heat shock genes (grpE-dnaK-dnaJ and groELS operons). Prevents heat-shock induction of these operons. The protein is Heat-inducible transcription repressor HrcA of Burkholderia mallei (strain NCTC 10247).